The following is a 258-amino-acid chain: Pyridoxal phosphate homeostasis protein (258 aa).

Lys-47 carries the N6-(pyridoxal phosphate)lysine modification.

Belongs to the pyridoxal phosphate-binding protein YggS/PROSC family.

Functionally, pyridoxal 5'-phosphate (PLP)-binding protein, which is involved in PLP homeostasis. In Mycobacterium bovis (strain ATCC BAA-935 / AF2122/97), this protein is Pyridoxal phosphate homeostasis protein.